Consider the following 329-residue polypeptide: Flotillin-like protein FloA (329 aa).

2 helical membrane-spanning segments follow: residues 4 to 24 and 26 to 46; these read IGFIIIAVIIVVALLILFSFV and VGLWISALAAGVHVGIGTLVG.

Belongs to the flotillin-like FloA family. As to quaternary structure, homooligomerizes.

Its subcellular location is the cell membrane. The protein localises to the membrane raft. Found in functional membrane microdomains (FMM) that may be equivalent to eukaryotic membrane rafts. FMMs are highly dynamic and increase in number as cells age. Flotillins are thought to be important factors in membrane fluidity. This is Flotillin-like protein FloA from Staphylococcus epidermidis (strain ATCC 35984 / DSM 28319 / BCRC 17069 / CCUG 31568 / BM 3577 / RP62A).